A 116-amino-acid chain; its full sequence is Aspartate 1-decarboxylase (116 aa).

The Schiff-base intermediate with substrate; via pyruvic acid role is filled by Ser-25. The residue at position 25 (Ser-25) is a Pyruvic acid (Ser). Residue Thr-57 coordinates substrate. Tyr-58 serves as the catalytic Proton donor. 72–74 (GAA) provides a ligand contact to substrate.

It belongs to the PanD family. As to quaternary structure, heterooctamer of four alpha and four beta subunits. It depends on pyruvate as a cofactor. In terms of processing, is synthesized initially as an inactive proenzyme, which is activated by self-cleavage at a specific serine bond to produce a beta-subunit with a hydroxyl group at its C-terminus and an alpha-subunit with a pyruvoyl group at its N-terminus.

It localises to the cytoplasm. It catalyses the reaction L-aspartate + H(+) = beta-alanine + CO2. The protein operates within cofactor biosynthesis; (R)-pantothenate biosynthesis; beta-alanine from L-aspartate: step 1/1. Catalyzes the pyruvoyl-dependent decarboxylation of aspartate to produce beta-alanine. This Helicobacter acinonychis (strain Sheeba) protein is Aspartate 1-decarboxylase.